The following is a 56-amino-acid chain: Ovomucoid (56 aa).

The 51-residue stretch at 6–56 (VDCSEYPKPACTMEQRPLCGSDNKTYGNKCNFCNAVVESNGTLTLSHFGKC) folds into the Kazal-like domain. 3 disulfide bridges follow: C8-C38, C16-C35, and C24-C56. N45 carries N-linked (GlcNAc...) asparagine glycosylation.

Its subcellular location is the secreted. In Afropavo congensis (Congo peafowl), this protein is Ovomucoid.